We begin with the raw amino-acid sequence, 205 residues long: GTP cyclohydrolase-2 (205 aa).

GTP is bound at residue 49-53 (RVHSE). 3 residues coordinate Zn(2+): Cys54, Cys65, and Cys67. GTP contacts are provided by residues Gln70, 92-94 (EGR), and Thr114. Asp126 functions as the Proton acceptor in the catalytic mechanism. Catalysis depends on Arg128, which acts as the Nucleophile. 2 residues coordinate GTP: Thr149 and Lys154.

The protein belongs to the GTP cyclohydrolase II family. It depends on Zn(2+) as a cofactor.

The enzyme catalyses GTP + 4 H2O = 2,5-diamino-6-hydroxy-4-(5-phosphoribosylamino)-pyrimidine + formate + 2 phosphate + 3 H(+). Its pathway is cofactor biosynthesis; riboflavin biosynthesis; 5-amino-6-(D-ribitylamino)uracil from GTP: step 1/4. In terms of biological role, catalyzes the conversion of GTP to 2,5-diamino-6-ribosylamino-4(3H)-pyrimidinone 5'-phosphate (DARP), formate and pyrophosphate. This is GTP cyclohydrolase-2 from Pseudomonas syringae pv. tomato (strain ATCC BAA-871 / DC3000).